Here is a 335-residue protein sequence, read N- to C-terminus: MKFVDSASIRIEAGKGGAGCLGFRREKYIPDGGPDGGDGGDGGHIYFQGQEGFNTLSEFRFKRLFRAKNGQPGSGQNKRGKSAQHLTVEIPLGTKIYDLETDELIGEMIEHEQIILVAKGGFHGLGNTRFKSSINRAPRKTTPGSPGEIREIGLELSIMADIGLLGMPNAGKSSLIRQISNAKSKVANYPFTTLHPSLGVVSYYDEHIIMADIPGLIENASKGVGLGFEFLKHLFHTKALLHVVDIFPVDGSDPVENFLTIEKELKKYDQKLAKKPRLLAINKMDLLSGGDRETVVQSLLKGTRYNGKVYRISALNGLGCKNLVAGLFKLVKENE.

Residues 1–159 (MKFVDSASIR…REIGLELSIM (159 aa)) enclose the Obg domain. The 173-residue stretch at 160 to 332 (ADIGLLGMPN…LVAGLFKLVK (173 aa)) folds into the OBG-type G domain. GTP is bound by residues 166–173 (GMPNAGKS), 191–195 (FTTLH), 212–215 (DIPG), 282–285 (NKMD), and 313–315 (SAL). Residues Ser-173 and Thr-193 each coordinate Mg(2+).

It belongs to the TRAFAC class OBG-HflX-like GTPase superfamily. OBG GTPase family. In terms of assembly, monomer. Mg(2+) serves as cofactor.

It localises to the cytoplasm. Its function is as follows. An essential GTPase which binds GTP, GDP and possibly (p)ppGpp with moderate affinity, with high nucleotide exchange rates and a fairly low GTP hydrolysis rate. Plays a role in control of the cell cycle, stress response, ribosome biogenesis and in those bacteria that undergo differentiation, in morphogenesis control. In Ruthia magnifica subsp. Calyptogena magnifica, this protein is GTPase Obg.